Here is a 234-residue protein sequence, read N- to C-terminus: Proteasome subunit alpha type-2 (234 aa).

N-acetylalanine is present on alanine 2. Tyrosine 6 is subject to Phosphotyrosine. 3 positions are modified to phosphoserine: serine 7, serine 14, and serine 16. Position 24 is a phosphotyrosine (tyrosine 24). Lysine 70 carries the N6-acetyllysine modification. 2 positions are modified to phosphotyrosine: tyrosine 76 and tyrosine 121. The residue at position 171 (lysine 171) is an N6-acetyllysine.

The protein belongs to the peptidase T1A family. As to quaternary structure, the 26S proteasome consists of a 20S proteasome core and two 19S regulatory subunits. The 20S proteasome core is a barrel-shaped complex made of 28 subunits that are arranged in four stacked rings. The two outer rings are each formed by seven alpha subunits, and the two inner rings are formed by seven beta subunits. The proteolytic activity is exerted by three beta-subunits PSMB5, PSMB6 and PSMB7. In terms of processing, phosphorylated on tyrosine residues; which may be important for nuclear import. As to expression, detected in liver (at protein level).

Its subcellular location is the cytoplasm. It is found in the nucleus. Functionally, component of the 20S core proteasome complex involved in the proteolytic degradation of most intracellular proteins. This complex plays numerous essential roles within the cell by associating with different regulatory particles. Associated with two 19S regulatory particles, forms the 26S proteasome and thus participates in the ATP-dependent degradation of ubiquitinated proteins. The 26S proteasome plays a key role in the maintenance of protein homeostasis by removing misfolded or damaged proteins that could impair cellular functions, and by removing proteins whose functions are no longer required. Associated with the PA200 or PA28, the 20S proteasome mediates ubiquitin-independent protein degradation. This type of proteolysis is required in several pathways including spermatogenesis (20S-PA200 complex) or generation of a subset of MHC class I-presented antigenic peptides (20S-PA28 complex). This chain is Proteasome subunit alpha type-2 (Psma2), found in Mus musculus (Mouse).